The sequence spans 450 residues: MARLFGTDGVRGVANQDLTAELALDLSVAAAHVLGEAGAFGHRQPTALVARDPRASGEFLEAAVCAGLASAGVDVLRVGVIPTPAAAYLVNEYRTDLGVMLSASHNPMPDNGIKFFSRGGVKLPDDLEDAIEQRMGEPWARPIGDKVGRIRYTPQAVDTYVDHLVRSLRQQDTLKGMKIVLDTANGASFHTATAAFTTQGAEVIAIHDQPDGLNINERCGSTHPEKLQAKVVEVGADMGLAFDGDADRCLAVDHEGNIVDGDHIIAILALALQEDHRLASNTVVATIMSNLGLIIAMRAHDIHVDQTKVGDRYVLESMNANGFSLGGEQSGHVIMSEFATTGDGVLTGLHLAARVARTGKTLKELASVMTRLPQALINVRGVDKLRAGIDPDVNKAVADANQKLGDAGRVVLRPSGTEPVVRVMVEAGTQEEADQICSELAETVKMSLAL.

Ser104 acts as the Phosphoserine intermediate in catalysis. Mg(2+) is bound by residues Ser104, Asp243, Asp245, and Asp247. Ser104 is subject to Phosphoserine.

This sequence belongs to the phosphohexose mutase family. Requires Mg(2+) as cofactor. Post-translationally, activated by phosphorylation.

It carries out the reaction alpha-D-glucosamine 1-phosphate = D-glucosamine 6-phosphate. Catalyzes the conversion of glucosamine-6-phosphate to glucosamine-1-phosphate. The polypeptide is Phosphoglucosamine mutase (Cutibacterium acnes (strain DSM 16379 / KPA171202) (Propionibacterium acnes)).